The sequence spans 567 residues: Proline--tRNA ligase (567 aa).

The protein belongs to the class-II aminoacyl-tRNA synthetase family. ProS type 1 subfamily. As to quaternary structure, homodimer.

The protein resides in the cytoplasm. It carries out the reaction tRNA(Pro) + L-proline + ATP = L-prolyl-tRNA(Pro) + AMP + diphosphate. Its function is as follows. Catalyzes the attachment of proline to tRNA(Pro) in a two-step reaction: proline is first activated by ATP to form Pro-AMP and then transferred to the acceptor end of tRNA(Pro). As ProRS can inadvertently accommodate and process non-cognate amino acids such as alanine and cysteine, to avoid such errors it has two additional distinct editing activities against alanine. One activity is designated as 'pretransfer' editing and involves the tRNA(Pro)-independent hydrolysis of activated Ala-AMP. The other activity is designated 'posttransfer' editing and involves deacylation of mischarged Ala-tRNA(Pro). The misacylated Cys-tRNA(Pro) is not edited by ProRS. The chain is Proline--tRNA ligase from Campylobacter fetus subsp. fetus (strain 82-40).